The sequence spans 154 residues: Ribosomal RNA-processing protein 14-N (154 aa).

The tract at residues 36 to 154 is disordered; that stretch reads WKQKKSTLEE…KHKASPRAGF (119 aa). Position 80 is a phosphoserine (serine 80). The residue at position 83 (threonine 83) is a Phosphothreonine. A compositionally biased stretch (basic and acidic residues) spans 105 to 133; sequence QDLREKRKAGDLNQKRQNKRPVENEKDSQ. Residues 140–154 show a composition bias toward basic residues; it reads KVQKKKHKASPRAGF.

Belongs to the SURF6 family.

The protein resides in the nucleus. Its subcellular location is the nucleolus. Involved in ribosome biogenesis and cell polarity. Required for the synthesis of both 40S and 60S ribosomal subunits and may also play some direct role in correct positioning of the mitotic spindle during mitosis. This chain is Ribosomal RNA-processing protein 14-N (rrp14n), found in Schizosaccharomyces pombe (strain 972 / ATCC 24843) (Fission yeast).